We begin with the raw amino-acid sequence, 428 residues long: Histidine--tRNA ligase (428 aa).

It belongs to the class-II aminoacyl-tRNA synthetase family. Homodimer.

It localises to the cytoplasm. The catalysed reaction is tRNA(His) + L-histidine + ATP = L-histidyl-tRNA(His) + AMP + diphosphate + H(+). The chain is Histidine--tRNA ligase from Ectopseudomonas mendocina (strain ymp) (Pseudomonas mendocina).